We begin with the raw amino-acid sequence, 65 residues long: Hirudin-3A' (65 aa).

The segment at 1 to 3 is interaction with thrombin active site; sequence VVY. 3 disulfide bridges follow: cysteine 6-cysteine 14, cysteine 16-cysteine 28, and cysteine 22-cysteine 39. The segment at 32 to 65 is disordered; it reads SDGEKNECVTGEGTPKPQSHNDGDFEEIPEEYLQ. The O-linked (GalNAc...) threonine glycan is linked to threonine 45. The segment at 55-65 is interaction with fibrinogen-binding exosite of thrombin; sequence DFEEIPEEYLQ. Residues 55–65 show a composition bias toward acidic residues; sequence DFEEIPEEYLQ. Tyrosine 63 carries the sulfotyrosine modification.

The protein belongs to the protease inhibitor I14 (hirudin) family.

It is found in the secreted. In terms of biological role, hirudin is a potent thrombin-specific protease inhibitor. It forms a stable non-covalent complex with alpha-thrombin, thereby abolishing its ability to cleave fibrinogen. The sequence is that of Hirudin-3A' from Hirudo medicinalis (Medicinal leech).